The sequence spans 223 residues: Endonuclease V (223 aa).

Residues D44 and D109 each contribute to the Mg(2+) site.

Belongs to the endonuclease V family. Mg(2+) is required as a cofactor.

Its subcellular location is the cytoplasm. The enzyme catalyses Endonucleolytic cleavage at apurinic or apyrimidinic sites to products with a 5'-phosphate.. DNA repair enzyme involved in the repair of deaminated bases. Selectively cleaves double-stranded DNA at the second phosphodiester bond 3' to a deoxyinosine leaving behind the intact lesion on the nicked DNA. This Methanothrix thermoacetophila (strain DSM 6194 / JCM 14653 / NBRC 101360 / PT) (Methanosaeta thermophila) protein is Endonuclease V.